The primary structure comprises 637 residues: Dihydrolipoyllysine-residue acetyltransferase component of pyruvate dehydrogenase complex, mitochondrial (637 aa).

The N-terminal 85 residues, 1–85 (MWRVCVRRAQ…LLGSPGRRSY (85 aa)), are a transit peptide targeting the mitochondrion. The segment at 80 to 100 (PGRRSYSLPPHQKVPLPSLSP) is disordered. One can recognise a Lipoyl-binding 1 domain in the interval 90-166 (HQKVPLPSLS…PIGSIICITV (77 aa)). S99 carries the phosphoserine modification. At K131 the chain carries N6-lipoyllysine. 2 disordered regions span residues 189-219 (QAAAPTPAPAPCAAPTAPSAKAPGSSYPPHM) and 307-340 (LKPQAPPPVPPPVAAAPPTAQPLAPTPSGLPAGP). The segment covering 201–211 (AAPTAPSAKAP) has biased composition (low complexity). The Lipoyl-binding 2 domain occupies 218-287 (HMQVSAVGEQ…PLGAPLCIIV (70 aa)). Pro residues predominate over residues 310 to 321 (QAPPPVPPPVAA). Residues 322–333 (APPTAQPLAPTP) are compositionally biased toward low complexity. The region spanning 345-382 (FVSPLAKKLAAERGIDLTQVKGTGPEGRIIKKDIDSFV) is the Peripheral subunit-binding (PSBD) domain. R451 provides a ligand contact to CoA. An N6-acetyllysine modification is found at K456. The residue at position 463 (K463) is an N6-succinyllysine. S465 is a binding site for CoA. K537 carries the N6-succinyllysine modification. CoA contacts are provided by S556, N557, and G581. Residues H610 and D614 contribute to the active site.

Belongs to the 2-oxoacid dehydrogenase family. As to quaternary structure, part of the pyruvate dehydrogenase complex (PDHc) that is a multi-enzyme complex composed of multiple copies of three enzymes, pyruvate dehydrogenase (subunits PDH1A and PDHB, E1 component), dihydrolipoamide acetyltransferase (DLAT, E2 component), and dihydrolipoamide dehydrogenase (DLD, E3 component) to which is added an additional protein the E3-binding protein (PDHX, E3BP). In terms of structural architecture, the E2 and E3BP components assemble into a 60meric central core with icosahedral symmetry. The central core is decorated with E1 and E3 proteins. Currently, two alternative models for the E2:E3BP stoichiometry are considered as being either 48:12 (E2(48)-E3BP(12)) or 40:20 (E2(40)-E3BP(20)). Interacts with PDK2 and PDK3. Interacts with SIRT4. Interacts with PDHB. Requires (R)-lipoate as cofactor. In terms of processing, delipoylated at Lys-131 by SIRT4, delipoylation decreases the PHD complex activity. As to expression, detected at higher levels in cauda epididymal spermatazoa than in caput epididymal spermatazoa (at protein level).

The protein localises to the mitochondrion matrix. The catalysed reaction is N(6)-[(R)-dihydrolipoyl]-L-lysyl-[protein] + acetyl-CoA = N(6)-[(R)-S(8)-acetyldihydrolipoyl]-L-lysyl-[protein] + CoA. Its function is as follows. As part of the pyruvate dehydrogenase complex, catalyzes the transfers of an acetyl group to a lipoic acid moiety. The pyruvate dehydrogenase complex, catalyzes the overall conversion of pyruvate to acetyl-CoA and CO(2), and thereby links cytoplasmic glycolysis and the mitochondrial tricarboxylic acid (TCA) cycle. The polypeptide is Dihydrolipoyllysine-residue acetyltransferase component of pyruvate dehydrogenase complex, mitochondrial (Mesocricetus auratus (Golden hamster)).